A 243-amino-acid polypeptide reads, in one-letter code: CRISPR-associated endoribonuclease Cas6 (243 aa).

This sequence belongs to the CRISPR-associated endoribonuclease Cas6 family. Part of the Csm effector complex that includes at least Cas10(1), Csm2(3), Csm3(5), Csm4(1); the presence of Csm5 and Cas6 may depend on the processing state of precursor crRNA. Csm with a precursor crRNA does not include Csm5, while Cas6, the enzyme probably involved in pre-crRNA processing, is found associated with a subset of the Csm complex that is probably in the process of pre-crRNA maturation. The Csm complex is elongated and slightly twisted with a maximal length of 215 Angstroms and a diameter of 75-80 Angstroms. It has been modeled to have a central protein filamant of Csm3 subunits along which the dsRNA helix of paired crRNA and target RNA binds. The filament is capped at one end by Cas10 and Csm4 and at the other end by Csm5; ssDNA is thought to bind to the N-terminal HD domain of Cas10.

CRISPR (clustered regularly interspaced short palindromic repeat) is an adaptive immune system that provides protection against mobile genetic elements (viruses, transposable elements and conjugative plasmids). CRISPR clusters contain spacers, sequences complementary to antecedent mobile elements, and target invading nucleic acids. CRISPR clusters are transcribed and processed into CRISPR RNA (crRNA). The type III-A Csm effector complex binds crRNA and acts as a crRNA-guided RNase, DNase and cyclic oligoadenylate synthase; binding of target RNA cognate to the crRNA is required for all activities. In a heterologous host this Csm effector complex restricts ssRNA phage MS2, suggesting it may target RNA viruses in vivo. Its function is as follows. Csm functions as a non-specific ssDNase. Base-pairing between crRNA and target RNA to form a ternary Csm complex activates a ssDNase activity; target RNA cleavage suppresses the ssDNase, a temporal control that prevents uncontrolled DNA degradation. Viral RNA transcripts probably tether the Csm complex to the viral genome, recruiting Cas10 ssDNA activity which is able to degrade DNA in the transcription bubble, spatially controlling the DNase activity. Functionally, this protein processes pre-crRNA into individual crRNA units. The polypeptide is CRISPR-associated endoribonuclease Cas6 (Streptococcus thermophilus).